The primary structure comprises 376 residues: Putative F-box/FBD/LRR-repeat protein At5g52460 (376 aa).

In terms of domain architecture, F-box spans 16–75; sequence RDEISSLPDDLLIQILLLVPIKDAVGTMILSKRWRYVWTLLPKLEYSDPGDECESVWKFL. 2 LRR repeats span residues 131 to 154 and 199 to 224; these read CKTL…VCLP and FAKV…KFLK. Residues 296–348 enclose the FBD domain; sequence CHGTNQGTVPRCLSAHLDEEFVWHGYRGNEEETQLIRYIFANAKCLKKREIST.

The protein is Putative F-box/FBD/LRR-repeat protein At5g52460 (EDA41) of Arabidopsis thaliana (Mouse-ear cress).